A 251-amino-acid chain; its full sequence is tRNA (guanine-N(1)-)-methyltransferase (251 aa).

Residues Gly111 and Leu131–Leu136 contribute to the S-adenosyl-L-methionine site.

This sequence belongs to the RNA methyltransferase TrmD family. As to quaternary structure, homodimer.

It localises to the cytoplasm. It catalyses the reaction guanosine(37) in tRNA + S-adenosyl-L-methionine = N(1)-methylguanosine(37) in tRNA + S-adenosyl-L-homocysteine + H(+). In terms of biological role, specifically methylates guanosine-37 in various tRNAs. The polypeptide is tRNA (guanine-N(1)-)-methyltransferase (Synechococcus sp. (strain JA-2-3B'a(2-13)) (Cyanobacteria bacterium Yellowstone B-Prime)).